Consider the following 765-residue polypeptide: Protein BCH2 (765 aa).

The tract at residues 1–31 is disordered; that stretch reads MSFLWGSTKSKKGKNKKAAGSLPSGVVPQQR. The segment at 735 to 765 is CHS5-binding; it reads LECLSKNRNEACLAYERPLPDLPSTIKPLAD.

The protein belongs to the CHAPS family. In terms of assembly, component of the CHS5/6 complex composed of the 4 CHAPS proteins BCH1, BCH2, BUD7, and CHS6 as well as at least CHS5 and GTP-bound ARF1. The complex interacts with the cargo protein CHS3.

It localises to the golgi apparatus. Its subcellular location is the trans-Golgi network membrane. In terms of biological role, member of the CHS5-ARF1P-binding proteins (CHAPS) which mediates export of specific cargo proteins, including chitin synthase CHS3. In Saccharomyces cerevisiae (strain ATCC 204508 / S288c) (Baker's yeast), this protein is Protein BCH2 (BCH2).